A 205-amino-acid chain; its full sequence is Outer-membrane lipoprotein carrier protein (205 aa).

Residues 1 to 19 (MKKIIICFIFVFSINVSFA) form the signal peptide.

This sequence belongs to the LolA family. As to quaternary structure, monomer.

Its subcellular location is the periplasm. Participates in the translocation of lipoproteins from the inner membrane to the outer membrane. Only forms a complex with a lipoprotein if the residue after the N-terminal Cys is not an aspartate (The Asp acts as a targeting signal to indicate that the lipoprotein should stay in the inner membrane). This Francisella tularensis subsp. holarctica (strain LVS) protein is Outer-membrane lipoprotein carrier protein.